Here is a 430-residue protein sequence, read N- to C-terminus: tRNA(Ile)-lysidine synthase (430 aa).

27 to 32 (SGGSDS) is a binding site for ATP.

This sequence belongs to the tRNA(Ile)-lysidine synthase family.

The protein localises to the cytoplasm. The enzyme catalyses cytidine(34) in tRNA(Ile2) + L-lysine + ATP = lysidine(34) in tRNA(Ile2) + AMP + diphosphate + H(+). Functionally, ligates lysine onto the cytidine present at position 34 of the AUA codon-specific tRNA(Ile) that contains the anticodon CAU, in an ATP-dependent manner. Cytidine is converted to lysidine, thus changing the amino acid specificity of the tRNA from methionine to isoleucine. The sequence is that of tRNA(Ile)-lysidine synthase from Rickettsia bellii (strain RML369-C).